The chain runs to 199 residues: NAD(P)H dehydrogenase (quinone) (199 aa).

The Flavodoxin-like domain maps to Met-4–Val-190. Residues Ser-10–Met-15 and Thr-78–Tyr-80 each bind FMN. Residue Tyr-12 coordinates NAD(+). Residue Trp-98 participates in substrate binding. FMN-binding positions include Ser-113 to Gly-119 and His-134. The tract at residues Gly-158–Asp-181 is disordered. Over residues Met-163–Ala-177 the composition is skewed to polar residues.

It belongs to the WrbA family. FMN is required as a cofactor.

It carries out the reaction a quinone + NADH + H(+) = a quinol + NAD(+). It catalyses the reaction a quinone + NADPH + H(+) = a quinol + NADP(+). The sequence is that of NAD(P)H dehydrogenase (quinone) from Brucella ovis (strain ATCC 25840 / 63/290 / NCTC 10512).